We begin with the raw amino-acid sequence, 166 residues long: NADPH-dependent 7-cyano-7-deazaguanine reductase (166 aa).

Residue Cys-57 is the Thioimide intermediate of the active site. Asp-64 serves as the catalytic Proton donor. Substrate-binding positions include 79 to 81 and 98 to 99; these read VES and HE.

The protein belongs to the GTP cyclohydrolase I family. QueF type 1 subfamily.

It localises to the cytoplasm. The enzyme catalyses 7-aminomethyl-7-carbaguanine + 2 NADP(+) = 7-cyano-7-deazaguanine + 2 NADPH + 3 H(+). The protein operates within tRNA modification; tRNA-queuosine biosynthesis. In terms of biological role, catalyzes the NADPH-dependent reduction of 7-cyano-7-deazaguanine (preQ0) to 7-aminomethyl-7-deazaguanine (preQ1). The sequence is that of NADPH-dependent 7-cyano-7-deazaguanine reductase from Staphylococcus aureus (strain MRSA252).